A 255-amino-acid polypeptide reads, in one-letter code: 1-(5-phosphoribosyl)-5-[(5-phosphoribosylamino)methylideneamino] imidazole-4-carboxamide isomerase (255 aa).

Residue Asp8 is the Proton acceptor of the active site. Asp129 serves as the catalytic Proton donor.

Belongs to the HisA/HisF family.

The protein resides in the cytoplasm. The enzyme catalyses 1-(5-phospho-beta-D-ribosyl)-5-[(5-phospho-beta-D-ribosylamino)methylideneamino]imidazole-4-carboxamide = 5-[(5-phospho-1-deoxy-D-ribulos-1-ylimino)methylamino]-1-(5-phospho-beta-D-ribosyl)imidazole-4-carboxamide. The protein operates within amino-acid biosynthesis; L-histidine biosynthesis; L-histidine from 5-phospho-alpha-D-ribose 1-diphosphate: step 4/9. This chain is 1-(5-phosphoribosyl)-5-[(5-phosphoribosylamino)methylideneamino] imidazole-4-carboxamide isomerase, found in Prochlorococcus marinus (strain MIT 9312).